Here is a 123-residue protein sequence, read N- to C-terminus: Defensin beta 118 (123 aa).

Residues 1–19 (MKLLLLALPMLVLLPQVIP) form the signal peptide. 3 disulfide bridges follow: Cys-27–Cys-54, Cys-34–Cys-48, and Cys-38–Cys-55. A propeptide spanning residues 65-123 (VPATSPTPLSDSTPGIIDDILTVRFTTDYFEVSSKKDMVEESEAGRGTETSLPNVHHSS) is cleaved from the precursor. Residues 100–110 (KDMVEESEAGR) show a composition bias toward basic and acidic residues. A disordered region spans residues 100 to 123 (KDMVEESEAGRGTETSLPNVHHSS). A compositionally biased stretch (polar residues) spans 112–123 (TETSLPNVHHSS).

Belongs to the beta-defensin family. The three-dimensional structure formed by the three intramolecular disulfide bridges is indispensable for antimicrobial activity. As to expression, high-level and epididymis-specific expression. Most abundant in the epithelium of the caput and present in the epididymis lumen and bound to sperm. Also expressed in pancreas.

Its subcellular location is the secreted. Its function is as follows. Host defense peptide that exhibits antimicrobial activity against both Gram-negative bacteria, such as E.coli and S.typhimurium, and Gram-positive bacteria, such as S.aureus and B.subtilis. Inhibits cell adhesion of E.coli on intestinal epithelial enterocytes. Causes rapid permeabilization of both the outer and inner membrane of E.coli, leading to morphological alterations on the bacterial surface. Binds to bacterial lipopolysaccharides (LPS) with high affinity, and may thereby be involved in immunoregulation through LPS neutralization. May contribute to epididymal innate immunity and protect the sperm against attack by microorganisms. This chain is Defensin beta 118 (DEFB118), found in Homo sapiens (Human).